A 474-amino-acid polypeptide reads, in one-letter code: Kynureninase 2 (474 aa).

Pyridoxal 5'-phosphate is bound by residues leucine 144, threonine 145, 172 to 175 (FPSD), aspartate 258, histidine 261, and tyrosine 283. Position 284 is an N6-(pyridoxal phosphate)lysine (lysine 284). The pyridoxal 5'-phosphate site is built by tryptophan 323 and threonine 351.

This sequence belongs to the kynureninase family. Homodimer. It depends on pyridoxal 5'-phosphate as a cofactor.

Its subcellular location is the cytoplasm. The enzyme catalyses L-kynurenine + H2O = anthranilate + L-alanine + H(+). The catalysed reaction is 3-hydroxy-L-kynurenine + H2O = 3-hydroxyanthranilate + L-alanine + H(+). It functions in the pathway amino-acid degradation; L-kynurenine degradation; L-alanine and anthranilate from L-kynurenine: step 1/1. It participates in cofactor biosynthesis; NAD(+) biosynthesis; quinolinate from L-kynurenine: step 2/3. Functionally, catalyzes the cleavage of L-kynurenine (L-Kyn) and L-3-hydroxykynurenine (L-3OHKyn) into anthranilic acid (AA) and 3-hydroxyanthranilic acid (3-OHAA), respectively. This is Kynureninase 2 (bna5-2) from Emericella nidulans (strain FGSC A4 / ATCC 38163 / CBS 112.46 / NRRL 194 / M139) (Aspergillus nidulans).